We begin with the raw amino-acid sequence, 172 residues long: Putative phosphoesterase BCG9842_B4061 (172 aa).

Catalysis depends on histidine 34, which acts as the Proton donor. 2 short sequence motifs (HXTX) span residues histidine 34–leucine 37 and histidine 115–isoleucine 118. Histidine 115 functions as the Proton acceptor in the catalytic mechanism.

The protein belongs to the 2H phosphoesterase superfamily. YjcG family.

The chain is Putative phosphoesterase BCG9842_B4061 from Bacillus cereus (strain G9842).